We begin with the raw amino-acid sequence, 105 residues long: MKVRKGDTVLVISGKDKGAKGKVLVAYPDRNKVLVEGVNRIKKHTAESRTERGAASGGIVTQEAPISVSNVMLLDSDGKPTRVGYRKDDETGKNVRIAKSNGKDL.

Residues 77–93 (DGKPTRVGYRKDDETGK) show a composition bias toward basic and acidic residues. The segment at 77–105 (DGKPTRVGYRKDDETGKNVRIAKSNGKDL) is disordered.

This sequence belongs to the universal ribosomal protein uL24 family. As to quaternary structure, part of the 50S ribosomal subunit.

In terms of biological role, one of two assembly initiator proteins, it binds directly to the 5'-end of the 23S rRNA, where it nucleates assembly of the 50S subunit. Its function is as follows. One of the proteins that surrounds the polypeptide exit tunnel on the outside of the subunit. The chain is Large ribosomal subunit protein uL24 from Mycolicibacterium gilvum (strain PYR-GCK) (Mycobacterium gilvum (strain PYR-GCK)).